Consider the following 304-residue polypeptide: HPr kinase/phosphorylase (304 aa).

Catalysis depends on residues histidine 136 and lysine 157. An ATP-binding site is contributed by 151–158; that stretch reads GESGIGKS. Serine 158 is a binding site for Mg(2+). The active-site Proton acceptor; for phosphorylation activity. Proton donor; for dephosphorylation activity is the aspartate 175. The tract at residues 198 to 207 is important for the catalytic mechanism of both phosphorylation and dephosphorylation; sequence LEVRGMGIID. Position 199 (glutamate 199) interacts with Mg(2+). The active site involves arginine 240. The important for the catalytic mechanism of dephosphorylation stretch occupies residues 261 to 266; it reads PIRPGR.

The protein belongs to the HPrK/P family. As to quaternary structure, homohexamer. Requires Mg(2+) as cofactor.

The catalysed reaction is [HPr protein]-L-serine + ATP = [HPr protein]-O-phospho-L-serine + ADP + H(+). It carries out the reaction [HPr protein]-O-phospho-L-serine + phosphate + H(+) = [HPr protein]-L-serine + diphosphate. Catalyzes the ATP- as well as the pyrophosphate-dependent phosphorylation of a specific serine residue in HPr, a phosphocarrier protein of the phosphoenolpyruvate-dependent sugar phosphotransferase system (PTS). HprK/P also catalyzes the pyrophosphate-producing, inorganic phosphate-dependent dephosphorylation (phosphorolysis) of seryl-phosphorylated HPr (P-Ser-HPr). The two antagonistic activities of HprK/P are regulated by several intracellular metabolites, which change their concentration in response to the absence or presence of rapidly metabolisable carbon sources (glucose, fructose, etc.) in the growth medium. Therefore, by controlling the phosphorylation state of HPr, HPrK/P is a sensor enzyme that plays a major role in the regulation of carbon metabolism and sugar transport: it mediates carbon catabolite repression (CCR), and regulates PTS-catalyzed carbohydrate uptake and inducer exclusion. In Clostridium acetobutylicum (strain ATCC 824 / DSM 792 / JCM 1419 / IAM 19013 / LMG 5710 / NBRC 13948 / NRRL B-527 / VKM B-1787 / 2291 / W), this protein is HPr kinase/phosphorylase.